Consider the following 984-residue polypeptide: Probable beta-galactosidase C (984 aa).

An N-terminal signal peptide occupies residues 1–23 (MRLLSFIYLVWLALLTGTPQVSA). 5 residues coordinate substrate: Y82, N127, A128, E129, and N187. The active-site Proton donor is the E188. The N-linked (GlcNAc...) asparagine glycan is linked to N197. Y251 serves as a coordination point for substrate. A disulfide bridge links C257 with C304. N276 carries an N-linked (GlcNAc...) asparagine glycan. The Nucleophile role is filled by E287. Y353 serves as a coordination point for substrate. N391, N421, N434, N517, N602, N677, N715, N720, N759, and N805 each carry an N-linked (GlcNAc...) asparagine glycan.

It belongs to the glycosyl hydrolase 35 family.

It localises to the secreted. It carries out the reaction Hydrolysis of terminal non-reducing beta-D-galactose residues in beta-D-galactosides.. Functionally, cleaves beta-linked terminal galactosyl residues from gangliosides, glycoproteins, and glycosaminoglycans. This Aspergillus flavus (strain ATCC 200026 / FGSC A1120 / IAM 13836 / NRRL 3357 / JCM 12722 / SRRC 167) protein is Probable beta-galactosidase C (lacC).